The chain runs to 125 residues: uncharacterized protein (125 aa).

The protein resides in the plastid. This is an uncharacterized protein from Euglena longa (Euglenophycean alga).